The primary structure comprises 83 residues: Small ribosomal subunit protein eS21 (83 aa).

The protein belongs to the eukaryotic ribosomal protein eS21 family. In terms of assembly, component of the 40S small ribosomal subunit.

It is found in the cytoplasm. The protein resides in the cytosol. Its subcellular location is the rough endoplasmic reticulum. This Ixodes scapularis (Black-legged tick) protein is Small ribosomal subunit protein eS21 (RpS21).